Here is a 280-residue protein sequence, read N- to C-terminus: Probable endonuclease 4 (280 aa).

The Zn(2+) site is built by His69, His109, Glu145, Asp179, His182, His216, Asp229, His231, and Glu261.

It belongs to the AP endonuclease 2 family. Zn(2+) serves as cofactor.

The enzyme catalyses Endonucleolytic cleavage to 5'-phosphooligonucleotide end-products.. Functionally, endonuclease IV plays a role in DNA repair. It cleaves phosphodiester bonds at apurinic or apyrimidinic (AP) sites, generating a 3'-hydroxyl group and a 5'-terminal sugar phosphate. The protein is Probable endonuclease 4 of Aliarcobacter butzleri (strain RM4018) (Arcobacter butzleri).